Reading from the N-terminus, the 273-residue chain is Large ribosomal subunit protein uL2cz/uL2cy (273 aa).

Disordered stretches follow at residues 1–20 (MAKHLYKTPIPSTRKGTIDR) and 225–273 (PVDH…RRRK).

It belongs to the universal ribosomal protein uL2 family. Part of the 50S ribosomal subunit.

Its subcellular location is the plastid. It localises to the chloroplast. The sequence is that of Large ribosomal subunit protein uL2cz/uL2cy (rpl2-A) from Oryza nivara (Indian wild rice).